The primary structure comprises 439 residues: Diaminopimelate decarboxylase (439 aa).

Residue K66 is modified to N6-(pyridoxal phosphate)lysine. Residues G248 and E290–R293 contribute to the pyridoxal 5'-phosphate site. Substrate-binding residues include R293, R330, and Y334. Residue C361 is the Proton donor of the active site. Residues E362 and Y390 each contribute to the substrate site. Y390 provides a ligand contact to pyridoxal 5'-phosphate.

Belongs to the Orn/Lys/Arg decarboxylase class-II family. LysA subfamily. Homodimer. The cofactor is pyridoxal 5'-phosphate.

The catalysed reaction is meso-2,6-diaminopimelate + H(+) = L-lysine + CO2. It functions in the pathway amino-acid biosynthesis; L-lysine biosynthesis via DAP pathway; L-lysine from DL-2,6-diaminopimelate: step 1/1. Its function is as follows. Specifically catalyzes the decarboxylation of meso-diaminopimelate (meso-DAP) to L-lysine. This is Diaminopimelate decarboxylase from Halalkalibacterium halodurans (strain ATCC BAA-125 / DSM 18197 / FERM 7344 / JCM 9153 / C-125) (Bacillus halodurans).